Here is a 395-residue protein sequence, read N- to C-terminus: Phosphoglycerate kinase (395 aa).

Substrate is bound by residues 21–23 (DLN), Arg36, 59–62 (HLGR), Arg113, and Arg146. Residues Lys197, Glu324, and 350 to 353 (GGDT) contribute to the ATP site.

The protein belongs to the phosphoglycerate kinase family. In terms of assembly, monomer.

The protein resides in the cytoplasm. The enzyme catalyses (2R)-3-phosphoglycerate + ATP = (2R)-3-phospho-glyceroyl phosphate + ADP. Its pathway is carbohydrate degradation; glycolysis; pyruvate from D-glyceraldehyde 3-phosphate: step 2/5. This chain is Phosphoglycerate kinase, found in Acinetobacter baumannii (strain ACICU).